The following is a 416-amino-acid chain: Enterobactin exporter EntS (416 aa).

Residues M1–A21 lie on the Cytoplasmic side of the membrane. Residues V22–V42 traverse the membrane as a helical segment. Residues Q43–G55 are Periplasmic-facing. A helical membrane pass occupies residues L56–A76. The Cytoplasmic portion of the chain corresponds to D77–K83. The helical transmembrane segment at V84–L104 threads the bilayer. Residues L105–S109 are Periplasmic-facing. A helical transmembrane segment spans residues L110–A130. Over L131–R156 the chain is Cytoplasmic. Residues L157–W177 traverse the membrane as a helical segment. N178 is a topological domain (periplasmic). Residues Y179–L199 form a helical membrane-spanning segment. Topologically, residues P200 to R218 are cytoplasmic. A helical transmembrane segment spans residues F219–A239. Residues S240 to S256 are Periplasmic-facing. The chain crosses the membrane as a helical span at residues A257–T277. Residues S278–P287 are Cytoplasmic-facing. The helical transmembrane segment at G288–L307 threads the bilayer. Over M308–L313 the chain is Periplasmic. Residues G314 to L336 form a helical membrane-spanning segment. Residues Q337–N356 lie on the Cytoplasmic side of the membrane. Residues V357 to V377 traverse the membrane as a helical segment. A topological domain (periplasmic) is located at residue A378. Residues S379–G399 form a helical membrane-spanning segment. Residues E400 to L416 lie on the Cytoplasmic side of the membrane.

Belongs to the major facilitator superfamily. EntS (TC 2.A.1.38) family.

Its subcellular location is the cell inner membrane. Component of an export pathway for enterobactin. This chain is Enterobactin exporter EntS, found in Citrobacter koseri (strain ATCC BAA-895 / CDC 4225-83 / SGSC4696).